The chain runs to 225 residues: Recoverin family protein DDB_G0274781 (225 aa).

Residues 1–13 are compositionally biased toward low complexity; the sequence is MGNKQGKSPNNSK. A disordered region spans residues 1–20; sequence MGNKQGKSPNNSKGGKKYKI. A lipid anchor (N-myristoyl glycine) is attached at Gly-2. EF-hand domains follow at residues 78–113, 114–149, and 174–209; these read DNSP…LCKG, TAEE…AWIS, and MAQI…HPKI. Residues Asp-91, Asn-93, Asp-95, Thr-97, Glu-102, Asp-127, Asp-129, Asn-131, Tyr-133, Glu-138, Asp-187, Asn-189, Asp-191, Lys-193, and Glu-198 each contribute to the Ca(2+) site.

It belongs to the recoverin family.

The chain is Recoverin family protein DDB_G0274781 from Dictyostelium discoideum (Social amoeba).